Here is a 264-residue protein sequence, read N- to C-terminus: Small ribosomal subunit protein eS1 (264 aa).

It belongs to the eukaryotic ribosomal protein eS1 family. As to quaternary structure, component of the small ribosomal subunit. Mature ribosomes consist of a small (40S) and a large (60S) subunit. The 40S subunit contains about 33 different proteins and 1 molecule of RNA (18S). The 60S subunit contains about 49 different proteins and 3 molecules of RNA (25S, 5.8S and 5S).

Its subcellular location is the cytoplasm. In Babesia bovis, this protein is Small ribosomal subunit protein eS1.